A 421-amino-acid chain; its full sequence is Histidine--tRNA ligase (421 aa).

Belongs to the class-II aminoacyl-tRNA synthetase family. Homodimer.

It localises to the cytoplasm. It catalyses the reaction tRNA(His) + L-histidine + ATP = L-histidyl-tRNA(His) + AMP + diphosphate + H(+). The chain is Histidine--tRNA ligase from Coxiella burnetii (strain CbuK_Q154) (Coxiella burnetii (strain Q154)).